The primary structure comprises 365 residues: NAD(P)H-quinone oxidoreductase subunit 1, chloroplastic (365 aa).

Transmembrane regions (helical) follow at residues 32 to 52 (LFPILILVLGITIGVLVIVWL), 98 to 118 (YLFSIGPSIAVISILLGYLII), 129 to 149 (LSIGVFLWIAVSSIAPIGLLM), 257 to 279 (LFYVASYLNLLISSLFVTVLYLG), 302 to 322 (VFGTTIGIFITLAKTFLFLFI), and 338 to 358 (LLNLGWKFLLPISLGNLLLTT).

It belongs to the complex I subunit 1 family. In terms of assembly, NDH is composed of at least 16 different subunits, 5 of which are encoded in the nucleus.

It is found in the plastid. The protein localises to the chloroplast thylakoid membrane. The enzyme catalyses a plastoquinone + NADH + (n+1) H(+)(in) = a plastoquinol + NAD(+) + n H(+)(out). The catalysed reaction is a plastoquinone + NADPH + (n+1) H(+)(in) = a plastoquinol + NADP(+) + n H(+)(out). Functionally, NDH shuttles electrons from NAD(P)H:plastoquinone, via FMN and iron-sulfur (Fe-S) centers, to quinones in the photosynthetic chain and possibly in a chloroplast respiratory chain. The immediate electron acceptor for the enzyme in this species is believed to be plastoquinone. Couples the redox reaction to proton translocation, and thus conserves the redox energy in a proton gradient. The protein is NAD(P)H-quinone oxidoreductase subunit 1, chloroplastic of Spinacia oleracea (Spinach).